Consider the following 98-residue polypeptide: MIPTYMNIMLAFTISLLGMLTYRSHLVASLLCLEGMMMSLFIMATLMASNTHFPLINIMPIILLVFAACEAAVGLALLISISNTYGLDYIHNLNLLQC.

Transmembrane regions (helical) follow at residues 26–46 (LVAS…MATL) and 61–81 (IILL…LISI).

The protein belongs to the complex I subunit 4L family. Core subunit of respiratory chain NADH dehydrogenase (Complex I) which is composed of 45 different subunits.

It localises to the mitochondrion inner membrane. The enzyme catalyses a ubiquinone + NADH + 5 H(+)(in) = a ubiquinol + NAD(+) + 4 H(+)(out). In terms of biological role, core subunit of the mitochondrial membrane respiratory chain NADH dehydrogenase (Complex I) which catalyzes electron transfer from NADH through the respiratory chain, using ubiquinone as an electron acceptor. Part of the enzyme membrane arm which is embedded in the lipid bilayer and involved in proton translocation. The sequence is that of NADH-ubiquinone oxidoreductase chain 4L (MT-ND4L) from Macaca nigrescens (Gorontalo macaque).